We begin with the raw amino-acid sequence, 60 residues long: Protein translocase subunit SecE (60 aa).

Residues 37 to 57 (LLGFALVGGIGYLIHLGYIIL) form a helical membrane-spanning segment.

This sequence belongs to the SecE/SEC61-gamma family. In terms of assembly, component of the Sec protein translocase complex. Heterotrimer consisting of SecY (alpha), SecG (beta) and SecE (gamma) subunits. The heterotrimers can form oligomers, although 1 heterotrimer is thought to be able to translocate proteins. Interacts with the ribosome. May interact with SecDF, and other proteins may be involved.

The protein localises to the cell membrane. In terms of biological role, essential subunit of the Sec protein translocation channel SecYEG. Clamps together the 2 halves of SecY. May contact the channel plug during translocation. This Aeropyrum pernix (strain ATCC 700893 / DSM 11879 / JCM 9820 / NBRC 100138 / K1) protein is Protein translocase subunit SecE.